The primary structure comprises 389 residues: Probable L-tyrosine/L-aspartate decarboxylase (389 aa).

Position 233 is an N6-(pyridoxal phosphate)lysine (lysine 233).

This sequence belongs to the group II decarboxylase family. MfnA subfamily. It depends on pyridoxal 5'-phosphate as a cofactor.

It carries out the reaction L-tyrosine + H(+) = tyramine + CO2. The catalysed reaction is L-aspartate + H(+) = beta-alanine + CO2. The protein operates within cofactor biosynthesis; methanofuran biosynthesis. It functions in the pathway cofactor biosynthesis; coenzyme A biosynthesis. Its function is as follows. Catalyzes the decarboxylation of L-tyrosine to produce tyramine for methanofuran biosynthesis. Can also catalyze the decarboxylation of L-aspartate to produce beta-alanine for coenzyme A (CoA) biosynthesis. This Methanosphaera stadtmanae (strain ATCC 43021 / DSM 3091 / JCM 11832 / MCB-3) protein is Probable L-tyrosine/L-aspartate decarboxylase.